The following is a 265-amino-acid chain: Hydroxyethylthiazole kinase 2 (265 aa).

Met-39 contributes to the substrate binding site. ATP is bound by residues Lys-115 and Thr-168. Gly-195 is a binding site for substrate.

It belongs to the Thz kinase family. Mg(2+) is required as a cofactor.

The enzyme catalyses 5-(2-hydroxyethyl)-4-methylthiazole + ATP = 4-methyl-5-(2-phosphooxyethyl)-thiazole + ADP + H(+). It functions in the pathway cofactor biosynthesis; thiamine diphosphate biosynthesis; 4-methyl-5-(2-phosphoethyl)-thiazole from 5-(2-hydroxyethyl)-4-methylthiazole: step 1/1. Functionally, catalyzes the phosphorylation of the hydroxyl group of 4-methyl-5-beta-hydroxyethylthiazole (THZ). The chain is Hydroxyethylthiazole kinase 2 from Clostridium botulinum (strain Okra / Type B1).